The chain runs to 84 residues: Large ribosomal subunit protein bL27 (84 aa).

A disordered region spans residues M1–G22.

The protein belongs to the bacterial ribosomal protein bL27 family.

This is Large ribosomal subunit protein bL27 from Shewanella amazonensis (strain ATCC BAA-1098 / SB2B).